The following is a 63-amino-acid chain: 2-hydroxymuconate tautomerase (63 aa).

Catalysis depends on P2, which acts as the Proton acceptor; via imino nitrogen.

The protein belongs to the 4-oxalocrotonate tautomerase family. In terms of assembly, homohexamer.

It carries out the reaction (2Z,4E)-2-hydroxyhexa-2,4-dienedioate = (3E)-2-oxohex-3-enedioate. It functions in the pathway aromatic compound metabolism; salicylate degradation. Its function is as follows. Catalyzes the ketonization of 2-hydroxymuconate stereoselectively to yield 2-oxo-3-hexenedioate. The protein is 2-hydroxymuconate tautomerase (nahJ) of Pseudomonas putida (Arthrobacter siderocapsulatus).